A 594-amino-acid polypeptide reads, in one-letter code: Parathyroid hormone/parathyroid hormone-related peptide receptor (594 aa).

Residues 1 to 28 (MGTARIAPGLALLLCCPVLSSAYALVDA) form the signal peptide. Over 29 to 188 (DDVMTKEEQI…TREREVFDRL (160 aa)) the chain is Extracellular. Disulfide bonds link Cys-48–Cys-117, Cys-108–Cys-149, and Cys-132–Cys-171. The disordered stretch occupies residues 66-102 (DKGWTSASTSGKPRKDKASGKLYPESEEDKEAPTDSR). Residues Asn-152, Asn-162, Asn-167, and Asn-177 are each glycosylated (N-linked (GlcNAc...) asparagine). Residues 189–209 (GMIYTVGYSMSLASLTVAVLI) form a helical membrane-spanning segment. Residues 210 to 223 (LAYFRRLHCTRNYI) are Cytoplasmic-facing. The chain crosses the membrane as a helical span at residues 224–244 (HMHLFLSFMLRAVSIFVKDAV). Residues 245–295 (LYSGATLDEAERLTEEELRAIAQAPPPPATAAAGYAGCRVAVTFFLYFLAT) are Extracellular-facing. A helical membrane pass occupies residues 296–316 (NYYWILVEGLYLHSLIFMAFF). Topologically, residues 317 to 319 (SEK) are cytoplasmic. Residues 320–340 (KYLWGFTVFGWGLPAVFVAVW) form a helical membrane-spanning segment. The Extracellular segment spans residues 341-361 (VSVRATLANTGCWDLSSGNKK). A helical transmembrane segment spans residues 362-382 (WIIQVPILASIVLHFILFINI). The Cytoplasmic portion of the chain corresponds to 383–405 (VRVLATKLRETNAGRCDTRQQYR). The chain crosses the membrane as a helical span at residues 406 to 426 (KLLKSTLVLMPLFGVHYIVFM). At 427–440 (ATPYTEVSGTLWQV) the chain is on the extracellular side. A helical transmembrane segment spans residues 441-461 (QMHYEMLFNSFQGFFVAIIYC). Residues 462 to 594 (FCNGEVQAEI…LLQEEWETVM (133 aa)) are Cytoplasmic-facing. An Important for interaction with G proteins motif is present at residues 475-478 (WSRW). The segment at 525–594 (PTATTNGHPQ…LLQEEWETVM (70 aa)) is disordered. A compositionally biased stretch (low complexity) spans 543 to 558 (TPALETLETTPPATAA). Thr-552 is modified (phosphothreonine).

This sequence belongs to the G-protein coupled receptor 2 family. As to quaternary structure, homodimer in the absence of bound ligand. Peptide hormone binding leads to dissociation of the homodimer. Post-translationally, N-glycosylated.

Its subcellular location is the cell membrane. G-protein-coupled receptor for parathyroid hormone (PTH) and for parathyroid hormone-related peptide (PTHLH). Ligand binding causes a conformation change that triggers signaling via guanine nucleotide-binding proteins (G proteins) and modulates the activity of downstream effectors, such as adenylate cyclase (cAMP). PTH1R is coupled to G(s) G alpha proteins and mediates activation of adenylate cyclase activity. PTHLH dissociates from PTH1R more rapidly than PTH; as consequence, the cAMP response induced by PTHLH decays faster than the response induced by PTH. The protein is Parathyroid hormone/parathyroid hormone-related peptide receptor (PTH1R) of Pongo abelii (Sumatran orangutan).